The sequence spans 475 residues: Ribulose bisphosphate carboxylase large chain (475 aa).

Residues 1–2 constitute a propeptide that is removed on maturation; the sequence is MS. Proline 3 is subject to N-acetylproline. N6,N6,N6-trimethyllysine is present on lysine 14. Residues asparagine 123 and threonine 173 each contribute to the substrate site. Lysine 175 acts as the Proton acceptor in catalysis. Residue lysine 177 participates in substrate binding. 3 residues coordinate Mg(2+): lysine 201, aspartate 203, and glutamate 204. Lysine 201 is modified (N6-carboxylysine). The active-site Proton acceptor is histidine 294. Residues arginine 295, histidine 327, and serine 379 each contribute to the substrate site.

This sequence belongs to the RuBisCO large chain family. Type I subfamily. Heterohexadecamer of 8 large chains and 8 small chains; disulfide-linked. The disulfide link is formed within the large subunit homodimers. Mg(2+) serves as cofactor. Post-translationally, the disulfide bond which can form in the large chain dimeric partners within the hexadecamer appears to be associated with oxidative stress and protein turnover.

The protein localises to the plastid. It is found in the chloroplast. It catalyses the reaction 2 (2R)-3-phosphoglycerate + 2 H(+) = D-ribulose 1,5-bisphosphate + CO2 + H2O. It carries out the reaction D-ribulose 1,5-bisphosphate + O2 = 2-phosphoglycolate + (2R)-3-phosphoglycerate + 2 H(+). Functionally, ruBisCO catalyzes two reactions: the carboxylation of D-ribulose 1,5-bisphosphate, the primary event in carbon dioxide fixation, as well as the oxidative fragmentation of the pentose substrate in the photorespiration process. Both reactions occur simultaneously and in competition at the same active site. In Angiopteris evecta (Mule's foot fern), this protein is Ribulose bisphosphate carboxylase large chain.